Consider the following 416-residue polypeptide: Gamma-glutamyl phosphate reductase (416 aa).

The protein belongs to the gamma-glutamyl phosphate reductase family.

It localises to the cytoplasm. The enzyme catalyses L-glutamate 5-semialdehyde + phosphate + NADP(+) = L-glutamyl 5-phosphate + NADPH + H(+). Its pathway is amino-acid biosynthesis; L-proline biosynthesis; L-glutamate 5-semialdehyde from L-glutamate: step 2/2. In terms of biological role, catalyzes the NADPH-dependent reduction of L-glutamate 5-phosphate into L-glutamate 5-semialdehyde and phosphate. The product spontaneously undergoes cyclization to form 1-pyrroline-5-carboxylate. The chain is Gamma-glutamyl phosphate reductase from Vibrio cholerae serotype O1 (strain ATCC 39541 / Classical Ogawa 395 / O395).